A 124-amino-acid chain; its full sequence is Protein MGF 110-4L (124 aa).

A signal peptide spans 1-18; that stretch reads MLVIFLGILGLLANQVLG. N-linked (GlcNAc...) asparagine; by host glycosylation occurs at N64. A Prevents secretion from ER motif is present at residues 121-124; sequence KEDL.

It belongs to the asfivirus MGF 110 family.

Its subcellular location is the virion. It is found in the host endoplasmic reticulum-Golgi intermediate compartment. Causes the redistribution of lumenal ER protein to an enlarged ERGIC compartment. This is Protein MGF 110-4L from Ornithodoros (relapsing fever ticks).